The sequence spans 110 residues: Evasin P1166 (110 aa).

The first 24 residues, 1–24 (MEVKIFTLLQIALFIALGIHLVVA), serve as a signal peptide directing secretion. 3 disulfide bridges follow: cysteine 45-cysteine 67, cysteine 49-cysteine 69, and cysteine 60-cysteine 80. An N-linked (GlcNAc...) asparagine glycan is attached at asparagine 48. Residues 89 to 110 (SEYPNPKSSEIDAAAPLPRETH) are disordered.

The protein localises to the secreted. Functionally, salivary chemokine-binding protein which binds to host chemokines CXCL1, CXCL2 and CXCL8. The chain is Evasin P1166 from Ixodes ricinus (Common tick).